The sequence spans 297 residues: MAKVSELYDVTWEEMRDKMRKWREENSRNSEQIVEVGEELISEYASKLGDDIWIIYEQVMIAALDYGRDDLALFCLQELRRQFPGSHRVKRLTGMRFEAMERYDDAIQLYDRILQEDPTNTAARKRKIAIRKAQGKNVEAIRELNEYLEQFVGDQEAWHELAELYINEHDYAKAAFCLEELMMTNPYNHLYCQQYAEVKYTQGGLENLELSRKYFAQALKLNNRNMRALFGLYMSASHIASNPKASAKTKKDNMKYASWAASQINKAYQFAGRSKKETKYSLKAVEDMLETLQITQS.

Alanine 2 is subject to N-acetylalanine. 3 TPR repeats span residues 87-120 (HRVK…DPTN), 155-188 (QEAW…NPYN), and 192-225 (CQQY…NNRN). Residue lysine 255 is modified to N6-acetyllysine.

Belongs to the EMC2 family. Component of the ER membrane protein complex (EMC).

It is found in the endoplasmic reticulum membrane. Functionally, part of the endoplasmic reticulum membrane protein complex (EMC) that enables the energy-independent insertion into endoplasmic reticulum membranes of newly synthesized membrane proteins. Preferentially accommodates proteins with transmembrane domains that are weakly hydrophobic or contain destabilizing features such as charged and aromatic residues. Involved in the cotranslational insertion of multi-pass membrane proteins in which stop-transfer membrane-anchor sequences become ER membrane spanning helices. It is also required for the post-translational insertion of tail-anchored/TA proteins in endoplasmic reticulum membranes. By mediating the proper cotranslational insertion of N-terminal transmembrane domains in an N-exo topology, with translocated N-terminus in the lumen of the ER, controls the topology of multi-pass membrane proteins like the G protein-coupled receptors. By regulating the insertion of various proteins in membranes, it is indirectly involved in many cellular processes. The sequence is that of ER membrane protein complex subunit 2 from Bos taurus (Bovine).